Reading from the N-terminus, the 646-residue chain is Nucleoside triphosphatase I (646 aa).

Positions 48–213 (FIGLKNLNSM…NNLIGLLRPN (166 aa)) constitute a Helicase ATP-binding domain. 61–68 (WDTGMGKT) lines the ATP pocket. The short motif at 151–154 (DEVH) is the DEXH box element. The Helicase C-terminal domain maps to 377–540 (YIEACRIILN…KINVVFDLLK (164 aa)). Residues 466-532 (DIIILDMPWN…DIIKDKQSKI (67 aa)) form a binding to the cap-specific mRNA (nucleoside-2'-O-)-methyltransferase region.

This sequence belongs to the helicase family. NPH I subfamily. In terms of assembly, monomer. Interacts (via C-terminus) with RAP94 (via N-terminus). Interacts with the cap-specific mRNA (nucleoside-2'-O-)-methyltransferase.

The protein localises to the virion. The enzyme catalyses a ribonucleoside 5'-triphosphate + H2O = a ribonucleoside 5'-diphosphate + phosphate + H(+). Functionally, DNA-dependent ATPase required for providing the needed energy to achieve the termination of early transcripts. Acts in concert with the RAP94 subunit of the virion RNA polymerase and the capping enzyme/VTF to catalyze release of UUUUUNU-containing nascent RNA from the elongation complex. NPH-I must bind ssDNA in order to exhibit ATPase activity. The protein is Nucleoside triphosphatase I (NPH1) of Heliothis armigera entomopoxvirus (HaEPV).